Here is a 193-residue protein sequence, read N- to C-terminus: MTEEQKPTSEKSVKRKSNTYWEWGKAIIIAVALALLIRHFLFEPYLVEGSSMYPTLHDGERLFVNKSVNYIGEIERGDIVIINGDTSKVHYVKRLIGKPGETVEMKNDTLYINGKKIAEPYLASNKKEAKKLGVNLTGDFGPVKVPKGKYFVMGDNRLNSMDSRNGLGLIAENRIVGTSKFVFFPFHDMRQTK.

At 1 to 25 the chain is on the cytoplasmic side; sequence MTEEQKPTSEKSVKRKSNTYWEWGK. A helical membrane pass occupies residues 26–42; that stretch reads AIIIAVALALLIRHFLF. Residues 43 to 193 are Extracellular-facing; that stretch reads EPYLVEGSSM…FPFHDMRQTK (151 aa). Active-site residues include Ser-51 and Lys-93.

Belongs to the peptidase S26 family.

The protein resides in the cell membrane. The enzyme catalyses Cleavage of hydrophobic, N-terminal signal or leader sequences from secreted and periplasmic proteins.. In Bacillus amyloliquefaciens (Bacillus velezensis), this protein is Signal peptidase I (sipS2).